A 424-amino-acid polypeptide reads, in one-letter code: Histidine--tRNA ligase (424 aa).

It belongs to the class-II aminoacyl-tRNA synthetase family. Homodimer.

Its subcellular location is the cytoplasm. It catalyses the reaction tRNA(His) + L-histidine + ATP = L-histidyl-tRNA(His) + AMP + diphosphate + H(+). The sequence is that of Histidine--tRNA ligase from Shigella flexneri.